The following is a 407-amino-acid chain: Phosphopentomutase (407 aa).

Residues Asp10, Asp306, His311, Asp347, His348, and His359 each contribute to the Mn(2+) site.

It belongs to the phosphopentomutase family. It depends on Mn(2+) as a cofactor.

The protein resides in the cytoplasm. It catalyses the reaction 2-deoxy-alpha-D-ribose 1-phosphate = 2-deoxy-D-ribose 5-phosphate. It carries out the reaction alpha-D-ribose 1-phosphate = D-ribose 5-phosphate. Its pathway is carbohydrate degradation; 2-deoxy-D-ribose 1-phosphate degradation; D-glyceraldehyde 3-phosphate and acetaldehyde from 2-deoxy-alpha-D-ribose 1-phosphate: step 1/2. Functionally, isomerase that catalyzes the conversion of deoxy-ribose 1-phosphate (dRib-1-P) and ribose 1-phosphate (Rib-1-P) to deoxy-ribose 5-phosphate (dRib-5-P) and ribose 5-phosphate (Rib-5-P), respectively. The chain is Phosphopentomutase from Enterobacter sp. (strain 638).